Reading from the N-terminus, the 406-residue chain is MTLDVGPEDELPDWAAAKEFYQKYDPKDVIGRGVSSVVRRCVHRATGHEFAVKIMEVTAERLSPEQLEEVREATRRETHILRQVAGHPHIITLIDSYESSSFMFLVFDLMRKGELFDYLTEKVALSEKETRSIMRSLLEAVSFLHANNIVHRDLKPENILLDDNMQIRLSDFGFSCHLEPGEKLRELCGTPGYLAPEILKCSMDETHPGYGKEVDLWACGVILFTLLAGSPPFWHRRQILMLRMIMEGQYQFSSPEWDDRSSTVKDLISRLLQVDPEARLTAEQALQHPFFERCEGSQPWNLTPRQRFRVAVWTVLAAGRVALSTHRVRPLTKNALLRDPYALRSVRHLIDNCAFRLYGHWVKKGEQQNRAALFQHRPPGPFPIMGPEEEGDSAAITEDEAVLVLG.

A Protein kinase domain is found at 24–291 (YDPKDVIGRG…AEQALQHPFF (268 aa)). ATP contacts are provided by residues 30 to 38 (IGRGVSSVV) and K53. The active-site Proton acceptor is D153. Positions 306–330 (QRFRVAVWTVLAAGRVALSTHRVRP) are calmodulin-binding (domain-N). S345 is subject to Phosphoserine. The calmodulin-binding (domain-C) stretch occupies residues 346–370 (VRHLIDNCAFRLYGHWVKKGEQQNR).

This sequence belongs to the protein kinase superfamily. CAMK Ser/Thr protein kinase family. In terms of assembly, hexadecamer of 4 heterotetramers, each composed of alpha, beta, gamma, and delta subunits. Alpha (PHKA1 or PHKA2) and beta (PHKB) are regulatory subunits, gamma (PHKG1 or PHKG2) is the catalytic subunit, and delta is calmodulin.

The enzyme catalyses 2 ATP + phosphorylase b = 2 ADP + phosphorylase a.. In terms of biological role, catalytic subunit of the phosphorylase b kinase (PHK), which mediates the neural and hormonal regulation of glycogen breakdown (glycogenolysis) by phosphorylating and thereby activating glycogen phosphorylase. May regulate glycogeneolysis in the testis. In vitro, phosphorylates PYGM. The chain is Phosphorylase b kinase gamma catalytic chain, liver/testis isoform (PHKG2) from Homo sapiens (Human).